The sequence spans 122 residues: Serum amyloid A-2 protein (122 aa).

An N-terminal signal peptide occupies residues 1-18 (MKPFLSIIFCFLVLGVDS). At Gln-19 the chain carries Pyrrolidone carboxylic acid. Residues 100 to 122 (ANEWGRSGKDPNFFRPPGLPSKY) are disordered.

This sequence belongs to the SAA family. Apolipoprotein of the HDL complex. In terms of tissue distribution, expressed by the liver; secreted in plasma.

It is found in the secreted. In terms of biological role, major acute phase reactant. In Mesocricetus auratus (Golden hamster), this protein is Serum amyloid A-2 protein (SAA2).